A 633-amino-acid polypeptide reads, in one-letter code: Protein CASP (633 aa).

The Cytoplasmic segment spans residues 1–601; sequence MAVASEALLQ…LLFSRATRGL (601 aa). The tract at residues 39–60 is disordered; it reads QKTSLDERKELSSKTKEFRKQP. Coiled coils occupy residues 111 to 339 and 369 to 433; these read IEAA…LANK and SLES…VDVE. Residues 602–622 traverse the membrane as a helical; Anchor for type IV membrane protein segment; sequence FFMYLILLHLFIMIVLLKLGI. Residues 623-633 are Lumenal-facing; it reads AGNTAYTPMNY.

This sequence belongs to the CASP family.

The protein resides in the golgi apparatus membrane. Functionally, may be involved in intra-Golgi transport. The polypeptide is Protein CASP (coy1) (Schizosaccharomyces pombe (strain 972 / ATCC 24843) (Fission yeast)).